The primary structure comprises 95 residues: Cell division topological specificity factor (95 aa).

This sequence belongs to the MinE family.

Prevents the cell division inhibition by proteins MinC and MinD at internal division sites while permitting inhibition at polar sites. This ensures cell division at the proper site by restricting the formation of a division septum at the midpoint of the long axis of the cell. This chain is Cell division topological specificity factor, found in Methylorubrum extorquens (strain PA1) (Methylobacterium extorquens).